We begin with the raw amino-acid sequence, 384 residues long: Carbamoyl phosphate synthase small chain (384 aa).

Residues 1 to 192 (MPIAAAKPAL…FGPVAEQQGQ (192 aa)) are CPSase. 3 residues coordinate L-glutamine: S51, G244, and G246. One can recognise a Glutamine amidotransferase type-1 domain in the interval 196-381 (TVVALDFGVK…VKLMRQQKAE (186 aa)). Catalysis depends on C272, which acts as the Nucleophile. Positions 273, 276, 312, 314, and 315 each coordinate L-glutamine. Residues H354 and E356 contribute to the active site.

Belongs to the CarA family. As to quaternary structure, composed of two chains; the small (or glutamine) chain promotes the hydrolysis of glutamine to ammonia, which is used by the large (or ammonia) chain to synthesize carbamoyl phosphate. Tetramer of heterodimers (alpha,beta)4.

The enzyme catalyses hydrogencarbonate + L-glutamine + 2 ATP + H2O = carbamoyl phosphate + L-glutamate + 2 ADP + phosphate + 2 H(+). The catalysed reaction is L-glutamine + H2O = L-glutamate + NH4(+). Its pathway is amino-acid biosynthesis; L-arginine biosynthesis; carbamoyl phosphate from bicarbonate: step 1/1. It participates in pyrimidine metabolism; UMP biosynthesis via de novo pathway; (S)-dihydroorotate from bicarbonate: step 1/3. Functionally, small subunit of the glutamine-dependent carbamoyl phosphate synthetase (CPSase). CPSase catalyzes the formation of carbamoyl phosphate from the ammonia moiety of glutamine, carbonate, and phosphate donated by ATP, constituting the first step of 2 biosynthetic pathways, one leading to arginine and/or urea and the other to pyrimidine nucleotides. The small subunit (glutamine amidotransferase) binds and cleaves glutamine to supply the large subunit with the substrate ammonia. This chain is Carbamoyl phosphate synthase small chain, found in Synechocystis sp. (strain ATCC 27184 / PCC 6803 / Kazusa).